A 462-amino-acid polypeptide reads, in one-letter code: Phosphoglucosamine mutase (462 aa).

Catalysis depends on Ser-112, which acts as the Phosphoserine intermediate. Residues Ser-112, Asp-250, Asp-252, and Asp-254 each contribute to the Mg(2+) site. The residue at position 112 (Ser-112) is a Phosphoserine.

The protein belongs to the phosphohexose mutase family. Requires Mg(2+) as cofactor. Activated by phosphorylation.

The catalysed reaction is alpha-D-glucosamine 1-phosphate = D-glucosamine 6-phosphate. Its function is as follows. Catalyzes the conversion of glucosamine-6-phosphate to glucosamine-1-phosphate. The protein is Phosphoglucosamine mutase of Parasynechococcus marenigrum (strain WH8102).